The primary structure comprises 414 residues: Putative cytochrome P450 126 (414 aa).

Cys-363 contributes to the heme binding site.

The protein belongs to the cytochrome P450 family. It depends on heme as a cofactor.

The protein is Putative cytochrome P450 126 (cyp126) of Mycobacterium tuberculosis (strain CDC 1551 / Oshkosh).